Here is a 422-residue protein sequence, read N- to C-terminus: Glucose-1-phosphate adenylyltransferase (422 aa).

Alpha-D-glucose 1-phosphate is bound by residues Tyr-109, Gly-175, 190–191 (EK), and Ser-208.

The protein belongs to the bacterial/plant glucose-1-phosphate adenylyltransferase family. As to quaternary structure, homotetramer.

The enzyme catalyses alpha-D-glucose 1-phosphate + ATP + H(+) = ADP-alpha-D-glucose + diphosphate. Its pathway is glycan biosynthesis; glycogen biosynthesis. In terms of biological role, involved in the biosynthesis of ADP-glucose, a building block required for the elongation reactions to produce glycogen. Catalyzes the reaction between ATP and alpha-D-glucose 1-phosphate (G1P) to produce pyrophosphate and ADP-Glc. The sequence is that of Glucose-1-phosphate adenylyltransferase from Shewanella amazonensis (strain ATCC BAA-1098 / SB2B).